The following is a 265-amino-acid chain: Mlc titration factor A (265 aa).

His111, His148, His152, and Glu211 together coordinate Zn(2+).

It belongs to the MtfA family. As to quaternary structure, interacts with Mlc. Requires Zn(2+) as cofactor.

The protein resides in the cytoplasm. Involved in the modulation of the activity of the glucose-phosphotransferase system (glucose-PTS). Interacts with the transcriptional repressor Mlc, preventing its interaction with DNA and leading to the modulation of expression of genes regulated by Mlc, including ptsG, which encodes the PTS system glucose-specific EIICB component. In terms of biological role, shows zinc-dependent metallopeptidase activity. The polypeptide is Mlc titration factor A (Klebsiella pneumoniae (strain 342)).